A 134-amino-acid polypeptide reads, in one-letter code: Profilin (134 aa).

Belongs to the profilin family. As to quaternary structure, occurs in many kinds of cells as a complex with monomeric actin in a 1:1 ratio.

The protein resides in the cytoplasm. The protein localises to the cytoskeleton. Binds to actin and affects the structure of the cytoskeleton. At high concentrations, profilin prevents the polymerization of actin, whereas it enhances it at low concentrations. By binding to PIP2, it inhibits the formation of IP3 and DG. This chain is Profilin, found in Daucus carota (Wild carrot).